Consider the following 130-residue polypeptide: Small ribosomal subunit protein uS9 (130 aa).

Basic and acidic residues predominate over residues 99–110 (KKAGFLTRDPRM). The disordered stretch occupies residues 99–130 (KKAGFLTRDPRMKERKKYGLKKARRAPQFSKR). Residues 111–130 (KERKKYGLKKARRAPQFSKR) are compositionally biased toward basic residues.

This sequence belongs to the universal ribosomal protein uS9 family.

The sequence is that of Small ribosomal subunit protein uS9 from Clostridium botulinum (strain Eklund 17B / Type B).